The sequence spans 636 residues: DNA-dependent metalloprotease SPRTN (636 aa).

Residues 19 to 42 (QETPAAGWPDEDCPSSKRRRVDPS) form a disordered region. One can recognise a SprT-like domain in the interval 76–183 (RAMFLQFNDK…ASGTNITIYH (108 aa)). A Zn(2+)-binding site is contributed by His141. Residue Glu142 is part of the active site. His145 and His160 together coordinate Zn(2+). Disordered stretches follow at residues 238 to 382 (TYTK…GKQR) and 398 to 430 (RGAS…PSGK). Residues 241–268 (KIKEPENYGKTGKSDKQRDKMPATEMPK) show a composition bias toward basic and acidic residues. Low complexity predominate over residues 272–281 (PPSSTSSSGS). The short motif at 290–298 (FSGRGFVLG) is the SHP-box element. Polar residues predominate over residues 302–311 (QIPTNKQIQS). The span at 313 to 327 (PKAPPEPLHSPPDSP) shows a compositional bias: pro residues. Over residues 341 to 374 (RLSSGTSNIPRKRSVGNTNAFINVNGSPVRISNG) the composition is skewed to polar residues. The span at 399–416 (GASAVGSSKSSTDASTAD) shows a compositional bias: low complexity. The PIP-box motif lies at 451-458 (ESNISKYF). Residues 473-608 (TFGSPQKSAI…VRDQQANNPP (136 aa)) form a disordered region. 2 stretches are compositionally biased toward polar residues: residues 492–523 (FGSN…SGSS) and 545–554 (SPRTSGTTPS). Residues 535–566 (SNFPSPRNIGSPRTSGTTPSGAKKRSWEEHNS) carry the Nuclear localization signal motif. Composition is skewed to basic and acidic residues over residues 559 to 570 (RSWEEHNSERVF) and 584 to 593 (TDKKREEVRS). The UBZ4-type zinc-finger motif lies at 612 to 636 (TVHCPVCHIRLPESTINDHLDSCLL). Zn(2+)-binding residues include Cys615, Cys618, His630, and Cys634.

This sequence belongs to the Spartan family. As to quaternary structure, homodimer. It depends on Zn(2+) as a cofactor. In terms of processing, autocatalytically cleaved in response to double-stranded DNA-binding: autocatalytic cleavage takes place in trans and leads to inactivation.

The protein resides in the nucleus. It localises to the chromosome. DNA-binding activates the protease activity: single-stranded DNA-binding specifically activates ability to cleave covalent DNA-protein cross-links (DPCs). In contrast, double-stranded DNA-binding specifically activates autocatalytic cleavage, and subsequent inactivation. DNA-dependent metalloendopeptidase that mediates the proteolytic cleavage of covalent DNA-protein cross-links (DPCs) during DNA synthesis, thereby playing a key role in maintaining genomic integrity. DPCs are highly toxic DNA lesions that interfere with essential chromatin transactions, such as replication and transcription, and which are induced by reactive agents, such as UV light or formaldehyde. Associates with the DNA replication machinery and specifically removes DPCs during DNA synthesis. Catalyzes proteolytic cleavage of the hmces DNA-protein cross-link following unfolding by the brip1/fancj helicase. Acts as a pleiotropic protease for DNA-binding proteins cross-linked with DNA, such as top1, top2a, histones H3 and H4. Mediates degradation of DPCs that are not ubiquitinated, while it is not able to degrade ubiquitinated DPCs. SPRTN activation requires polymerase collision with DPCs followed by helicase bypass of DPCs. May also act as a 'reader' of ubiquitinated pcna: facilitates chromatin association of rad18 and is required for efficient pcna monoubiquitination, promoting a feed-forward loop to enhance pcna ubiquitination and translesion DNA synthesis. Acts as a regulator of translesion DNA synthesis by recruiting vcp/p97 to sites of DNA damage. This is DNA-dependent metalloprotease SPRTN from Danio rerio (Zebrafish).